We begin with the raw amino-acid sequence, 1106 residues long: Protein shuttle craft (1106 aa).

Disordered regions lie at residues 7-26 and 189-371; these read QLTNGAGEAGPGNESSAMAD and PAAA…KLSQ. Positions 189-201 are enriched in low complexity; it reads PAAATTNGNSTAS. 2 stretches are compositionally biased toward basic and acidic residues: residues 232–270 and 278–323; these read NYERERERERDRDRDRERDRDRDRDRDRDRDRDRDRDSR and RRSD…RDRI. Threonine 335 carries the phosphothreonine modification. Phosphoserine is present on residues serine 336, serine 339, serine 343, and serine 354. The span at 336–354 shows a compositional bias: polar residues; that stretch reads SNESAHPSPEKQSQLQQIS. The RING-type; atypical zinc finger occupies 386 to 433; sequence CLVCVEAIKSHQPTWSCRNCYHMLHLKCTITWASSSKSEVGWRCPACQ. 8 NF-X1-type zinc fingers span residues 474–492, 527–546, 585–604, 644–667, 706–725, 733–752, 844–867, and 876–896; these read CSHACTLLCHPGPCPPCQA, CGEHRCQAECHSGKCAACSE, CGHHKCKDSCHAGSCRPCKL, CGKPAHPHQCGSKCHLGQCPPCPK, CGKHKCNVECCIDIDHDCPL, CGKHKCDQPCHRGNCPPCYR, CGGHKCIKPCHEGPCQSAGEICRQ, and CGHKCAAACHEGACPETPCKE. Positions 1006–1071 constitute an R3H domain; it reads TKSVYETLTD…NRNVVATAHK (66 aa).

This sequence belongs to the NFX1 family. As to expression, ovaries and embryonic central nervous system.

The protein resides in the nucleus. In terms of biological role, plays an essential role during the late stages of embryonic neurogenesis. May either fine-tune the guidance or the spatial maintenance of the migrating SNB and in nerve roots, which are composed of axons originating from distinct groups of motor neurons and may be required to either guide or maintain the position of these nerves along a direct and straight path to their ultimate targets in particular muscle fields. May play a role in egg chamber development and/or may confer essential maternal contributions to the early embryo. This chain is Protein shuttle craft (stc), found in Drosophila melanogaster (Fruit fly).